Consider the following 409-residue polypeptide: Elongation factor Tu (409 aa).

The region spanning 10-214 (KPHVNIGTIG…AVDSYIPTPE (205 aa)) is the tr-type G domain. Residues 19 to 26 (GHVDHGKT) form a G1 region. GTP is bound at residue 19–26 (GHVDHGKT). Residue Thr26 participates in Mg(2+) binding. The segment at 60 to 64 (GITIN) is G2. Positions 81–84 (DCPG) are G3. GTP is bound by residues 81–85 (DCPGH) and 136–139 (NKVD). Residues 136 to 139 (NKVD) are G4. Positions 174 to 176 (SGL) are G5.

This sequence belongs to the TRAFAC class translation factor GTPase superfamily. Classic translation factor GTPase family. EF-Tu/EF-1A subfamily. In terms of assembly, monomer.

Its subcellular location is the cytoplasm. The catalysed reaction is GTP + H2O = GDP + phosphate + H(+). In terms of biological role, GTP hydrolase that promotes the GTP-dependent binding of aminoacyl-tRNA to the A-site of ribosomes during protein biosynthesis. This is Elongation factor Tu from Cyanothece sp. (strain PCC 7425 / ATCC 29141).